The following is a 424-amino-acid chain: UPF0597 protein SO_1403 (424 aa).

The protein belongs to the UPF0597 family.

In Shewanella oneidensis (strain ATCC 700550 / JCM 31522 / CIP 106686 / LMG 19005 / NCIMB 14063 / MR-1), this protein is UPF0597 protein SO_1403.